We begin with the raw amino-acid sequence, 312 residues long: Putative B3 domain-containing protein Os10g0537100 (312 aa).

Residues 35–153 constitute a DNA-binding region (TF-B3); it reads FEKVVTPSDV…RLFIDFRRRR (119 aa). Disordered regions lie at residues 161–182 and 286–312; these read FPPT…HPPL and LLQL…DLGL. The segment covering 170 to 180 has biased composition (basic residues); sequence HSHHHHQRHHP. The segment covering 286-301 has biased composition (low complexity); it reads LLQLPSPSSSTSSSTA.

It is found in the nucleus. This is Putative B3 domain-containing protein Os10g0537100 from Oryza sativa subsp. japonica (Rice).